Here is a 201-residue protein sequence, read N- to C-terminus: Holliday junction branch migration complex subunit RuvA (201 aa).

The segment at 1–64 (MIGRLRGTLA…EDAHLLYGFA (64 aa)) is domain I. Positions 65-143 (EKRERELFRE…AWENMPTIAP (79 aa)) are domain II. The tract at residues 144–152 (LVMEPRASA) is flexible linker. The segment at 153–201 (TVSSAEADAVSALIALGFKPQEASRAVAAVPGEDLSSEEMIRQALKGMV) is domain III.

This sequence belongs to the RuvA family. Homotetramer. Forms an RuvA(8)-RuvB(12)-Holliday junction (HJ) complex. HJ DNA is sandwiched between 2 RuvA tetramers; dsDNA enters through RuvA and exits via RuvB. An RuvB hexamer assembles on each DNA strand where it exits the tetramer. Each RuvB hexamer is contacted by two RuvA subunits (via domain III) on 2 adjacent RuvB subunits; this complex drives branch migration. In the full resolvosome a probable DNA-RuvA(4)-RuvB(12)-RuvC(2) complex forms which resolves the HJ.

It localises to the cytoplasm. The RuvA-RuvB-RuvC complex processes Holliday junction (HJ) DNA during genetic recombination and DNA repair, while the RuvA-RuvB complex plays an important role in the rescue of blocked DNA replication forks via replication fork reversal (RFR). RuvA specifically binds to HJ cruciform DNA, conferring on it an open structure. The RuvB hexamer acts as an ATP-dependent pump, pulling dsDNA into and through the RuvAB complex. HJ branch migration allows RuvC to scan DNA until it finds its consensus sequence, where it cleaves and resolves the cruciform DNA. The polypeptide is Holliday junction branch migration complex subunit RuvA (Pseudomonas aeruginosa (strain LESB58)).